Here is a 319-residue protein sequence, read N- to C-terminus: 2-oxoglutarate and iron-dependent oxygenase domain-containing protein 3 (319 aa).

Positions 1 to 34 are disordered; the sequence is MAPQRRAATKAPEGNGAAERRNRSSTKKDRAPRE. The Cytoplasmic portion of the chain corresponds to 1-42; sequence MAPQRRAATKAPEGNGAAERRNRSSTKKDRAPREVQRLWQRP. The span at 18–34 shows a compositional bias: basic and acidic residues; sequence AERRNRSSTKKDRAPRE. The helical; Signal-anchor for type II membrane protein transmembrane segment at 43–65 threads the bilayer; sequence WLRTAGLGAGFVLTALLLWSSLG. Residues 66–319 lie on the Lumenal side of the membrane; the sequence is ADDGVAEVLA…DHGIEDPAFP (254 aa). One can recognise a Fe2OG dioxygenase domain in the interval 207–309; sequence KPTFFSRINS…AITIAFSCNP (103 aa). N-linked (GlcNAc...) asparagine glycosylation is present at Asn215. 3 residues coordinate Fe cation: His230, Asp232, and His288. Arg298 is an active-site residue. A 2-oxoglutarate-binding site is contributed by Arg298.

It belongs to the OGFOD3 family. Fe(2+) is required as a cofactor. Requires L-ascorbate as cofactor.

It is found in the membrane. The polypeptide is 2-oxoglutarate and iron-dependent oxygenase domain-containing protein 3 (OGFOD3) (Homo sapiens (Human)).